Here is a 372-residue protein sequence, read N- to C-terminus: DNA-directed RNA polymerase subunit alpha (372 aa).

The interval 1–268 is alpha N-terminal domain (alpha-NTD); it reads MIFDEDSNSV…DQFQPFINFD (268 aa). Positions 280-372 are alpha C-terminal domain (alpha-CTD); it reads KDALPYDSNL…ESLSKQYSEE (93 aa).

The protein belongs to the RNA polymerase alpha chain family. As to quaternary structure, homodimer. The RNAP catalytic core consists of 2 alpha, 1 beta, 1 beta' and 1 omega subunit. When a sigma factor is associated with the core the holoenzyme is formed, which can initiate transcription.

It catalyses the reaction RNA(n) + a ribonucleoside 5'-triphosphate = RNA(n+1) + diphosphate. Its function is as follows. DNA-dependent RNA polymerase catalyzes the transcription of DNA into RNA using the four ribonucleoside triphosphates as substrates. In Ehrlichia canis (strain Jake), this protein is DNA-directed RNA polymerase subunit alpha.